The sequence spans 324 residues: Aspartate carbamoyltransferase catalytic subunit (324 aa).

Carbamoyl phosphate is bound by residues R55 and T56. L-aspartate is bound at residue K83. R105, H135, and Q138 together coordinate carbamoyl phosphate. Residues R173 and R227 each contribute to the L-aspartate site. Residues G268 and P269 each coordinate carbamoyl phosphate.

Belongs to the aspartate/ornithine carbamoyltransferase superfamily. ATCase family. As to quaternary structure, heterododecamer (2C3:3R2) of six catalytic PyrB chains organized as two trimers (C3), and six regulatory PyrI chains organized as three dimers (R2).

It carries out the reaction carbamoyl phosphate + L-aspartate = N-carbamoyl-L-aspartate + phosphate + H(+). The protein operates within pyrimidine metabolism; UMP biosynthesis via de novo pathway; (S)-dihydroorotate from bicarbonate: step 2/3. Catalyzes the condensation of carbamoyl phosphate and aspartate to form carbamoyl aspartate and inorganic phosphate, the committed step in the de novo pyrimidine nucleotide biosynthesis pathway. The polypeptide is Aspartate carbamoyltransferase catalytic subunit (Nocardioides sp. (strain ATCC BAA-499 / JS614)).